A 275-amino-acid polypeptide reads, in one-letter code: Ribosomal RNA small subunit methyltransferase A (275 aa).

Asparagine 28, leucine 30, glycine 55, glutamate 77, aspartate 103, and asparagine 123 together coordinate S-adenosyl-L-methionine.

This sequence belongs to the class I-like SAM-binding methyltransferase superfamily. rRNA adenine N(6)-methyltransferase family. RsmA subfamily.

Its subcellular location is the cytoplasm. It catalyses the reaction adenosine(1518)/adenosine(1519) in 16S rRNA + 4 S-adenosyl-L-methionine = N(6)-dimethyladenosine(1518)/N(6)-dimethyladenosine(1519) in 16S rRNA + 4 S-adenosyl-L-homocysteine + 4 H(+). Its function is as follows. Specifically dimethylates two adjacent adenosines (A1518 and A1519) in the loop of a conserved hairpin near the 3'-end of 16S rRNA in the 30S particle. May play a critical role in biogenesis of 30S subunits. The polypeptide is Ribosomal RNA small subunit methyltransferase A (Rhizobium etli (strain CIAT 652)).